The following is a 173-amino-acid chain: ATP synthase subunit b (173 aa).

Residues 15 to 35 traverse the membrane as a helical segment; it reads GVEWGTVIVQVLTFIVLLALL.

The protein belongs to the ATPase B chain family. F-type ATPases have 2 components, F(1) - the catalytic core - and F(0) - the membrane proton channel. F(1) has five subunits: alpha(3), beta(3), gamma(1), delta(1), epsilon(1). F(0) has three main subunits: a(1), b(2) and c(10-14). The alpha and beta chains form an alternating ring which encloses part of the gamma chain. F(1) is attached to F(0) by a central stalk formed by the gamma and epsilon chains, while a peripheral stalk is formed by the delta and b chains.

It localises to the cell membrane. In terms of biological role, f(1)F(0) ATP synthase produces ATP from ADP in the presence of a proton or sodium gradient. F-type ATPases consist of two structural domains, F(1) containing the extramembraneous catalytic core and F(0) containing the membrane proton channel, linked together by a central stalk and a peripheral stalk. During catalysis, ATP synthesis in the catalytic domain of F(1) is coupled via a rotary mechanism of the central stalk subunits to proton translocation. Component of the F(0) channel, it forms part of the peripheral stalk, linking F(1) to F(0). This Staphylococcus aureus (strain MRSA252) protein is ATP synthase subunit b.